The primary structure comprises 344 residues: 1-acyl-sn-glycerol-3-phosphate acyltransferase BAT2, chloroplastic (344 aa).

The N-terminal 49 residues, 1 to 49 (MDVASAPGVSSHPPYYSKPICSSQSSLIRIPINKGCCFARSSNLITSLH), are a transit peptide targeting the chloroplast. The helical transmembrane segment at 113 to 133 (GICFCLVAGVSAIVLIVLMIT) threads the bilayer. Residues 188-193 (HQSFLD) carry the HXXXXD motif motif. Residues 210-230 (TGIFVIPVIGWAMSMMGVVPL) traverse the membrane as a helical segment.

The protein belongs to the 1-acyl-sn-glycerol-3-phosphate acyltransferase family. In terms of tissue distribution, widely expressed.

It is found in the plastid. The protein localises to the chloroplast membrane. It carries out the reaction a fatty acyl-[ACP] + a 1-acyl-sn-glycero-3-phosphate = a 1,2-diacyl-sn-glycero-3-phosphate + holo-[ACP]. The enzyme catalyses a 1-acyl-sn-glycero-3-phosphate + an acyl-CoA = a 1,2-diacyl-sn-glycero-3-phosphate + CoA. It participates in phospholipid metabolism; CDP-diacylglycerol biosynthesis; CDP-diacylglycerol from sn-glycerol 3-phosphate: step 2/3. Plastidial enzyme of the prokaryotic glycerol-3-phosphate pathway that converts lysophosphatidic acid (LPA) into phosphatidic acid by incorporating an acyl moiety at position sn-2. Utilizes palmitoyl-ACP (16:0-ACP) to produce phosphatidic acid containing a saturated group at position sn-2, which is characteristic of lipids synthesized by the prokaryotic pathway. In vitro, can use 16:0-CoA as acyl donor. In Brassica napus (Rape), this protein is 1-acyl-sn-glycerol-3-phosphate acyltransferase BAT2, chloroplastic.